The following is an 807-amino-acid chain: Phenylalanine--tRNA ligase beta subunit (807 aa).

Residues 39 to 156 (AGEFSGVVIG…SDAPLGQCVR (118 aa)) enclose the tRNA-binding domain. In terms of domain architecture, B5 spans 409–488 (PQTKDVNLRR…RIFGYNNIPN (80 aa)). The Mg(2+) site is built by Asp466, Asp472, Glu475, and Glu476. Residues 713–806 (SRFPANRRDL…LKTELNASLR (94 aa)) enclose the FDX-ACB domain.

Belongs to the phenylalanyl-tRNA synthetase beta subunit family. Type 1 subfamily. Tetramer of two alpha and two beta subunits. Mg(2+) serves as cofactor.

It localises to the cytoplasm. It carries out the reaction tRNA(Phe) + L-phenylalanine + ATP = L-phenylalanyl-tRNA(Phe) + AMP + diphosphate + H(+). This chain is Phenylalanine--tRNA ligase beta subunit, found in Colwellia psychrerythraea (strain 34H / ATCC BAA-681) (Vibrio psychroerythus).